The primary structure comprises 316 residues: 4-hydroxy-3-methylbut-2-enyl diphosphate reductase (316 aa).

Residue Cys12 participates in [4Fe-4S] cluster binding. Positions 41 and 74 each coordinate (2E)-4-hydroxy-3-methylbut-2-enyl diphosphate. Residues His41 and His74 each contribute to the dimethylallyl diphosphate site. Positions 41 and 74 each coordinate isopentenyl diphosphate. Cys96 is a [4Fe-4S] cluster binding site. His124 is a binding site for (2E)-4-hydroxy-3-methylbut-2-enyl diphosphate. His124 contributes to the dimethylallyl diphosphate binding site. His124 is an isopentenyl diphosphate binding site. The active-site Proton donor is Glu126. Thr167 contributes to the (2E)-4-hydroxy-3-methylbut-2-enyl diphosphate binding site. Cys197 contributes to the [4Fe-4S] cluster binding site. Ser225, Ser226, Asn227, and Ser269 together coordinate (2E)-4-hydroxy-3-methylbut-2-enyl diphosphate. Dimethylallyl diphosphate-binding residues include Ser225, Ser226, Asn227, and Ser269. Residues Ser225, Ser226, Asn227, and Ser269 each coordinate isopentenyl diphosphate.

The protein belongs to the IspH family. In terms of assembly, homodimer. Requires [4Fe-4S] cluster as cofactor.

It catalyses the reaction isopentenyl diphosphate + 2 oxidized [2Fe-2S]-[ferredoxin] + H2O = (2E)-4-hydroxy-3-methylbut-2-enyl diphosphate + 2 reduced [2Fe-2S]-[ferredoxin] + 2 H(+). It carries out the reaction dimethylallyl diphosphate + 2 oxidized [2Fe-2S]-[ferredoxin] + H2O = (2E)-4-hydroxy-3-methylbut-2-enyl diphosphate + 2 reduced [2Fe-2S]-[ferredoxin] + 2 H(+). Its pathway is isoprenoid biosynthesis; dimethylallyl diphosphate biosynthesis; dimethylallyl diphosphate from (2E)-4-hydroxy-3-methylbutenyl diphosphate: step 1/1. The protein operates within isoprenoid biosynthesis; isopentenyl diphosphate biosynthesis via DXP pathway; isopentenyl diphosphate from 1-deoxy-D-xylulose 5-phosphate: step 6/6. Its function is as follows. Catalyzes the conversion of 1-hydroxy-2-methyl-2-(E)-butenyl 4-diphosphate (HMBPP) into a mixture of isopentenyl diphosphate (IPP) and dimethylallyl diphosphate (DMAPP). Acts in the terminal step of the DOXP/MEP pathway for isoprenoid precursor biosynthesis. This Escherichia coli (strain UTI89 / UPEC) protein is 4-hydroxy-3-methylbut-2-enyl diphosphate reductase.